We begin with the raw amino-acid sequence, 146 residues long: Flavodoxin (146 aa).

A Flavodoxin-like domain is found at 4-143 (SLIVYGSTTG…EIVSWGSGIA (140 aa)).

The protein belongs to the flavodoxin family. The cofactor is FMN.

Functionally, low-potential electron donor to a number of redox enzymes. The protein is Flavodoxin of Maridesulfovibrio salexigens (strain ATCC 14822 / DSM 2638 / NCIMB 8403 / VKM B-1763) (Desulfovibrio salexigens).